The sequence spans 139 residues: Aspartate 1-decarboxylase (139 aa).

Residue S25 is the Schiff-base intermediate with substrate; via pyruvic acid of the active site. S25 is modified (pyruvic acid (Ser)). Residue T57 coordinates substrate. Y58 serves as the catalytic Proton donor. Residue 73 to 75 (GAA) participates in substrate binding. Residues 117-139 (TGSDPADAPAGSGLLRGDRPAGR) are disordered.

This sequence belongs to the PanD family. In terms of assembly, heterooctamer of four alpha and four beta subunits. It depends on pyruvate as a cofactor. In terms of processing, is synthesized initially as an inactive proenzyme, which is activated by self-cleavage at a specific serine bond to produce a beta-subunit with a hydroxyl group at its C-terminus and an alpha-subunit with a pyruvoyl group at its N-terminus.

The protein localises to the cytoplasm. It catalyses the reaction L-aspartate + H(+) = beta-alanine + CO2. It functions in the pathway cofactor biosynthesis; (R)-pantothenate biosynthesis; beta-alanine from L-aspartate: step 1/1. Functionally, catalyzes the pyruvoyl-dependent decarboxylation of aspartate to produce beta-alanine. The protein is Aspartate 1-decarboxylase of Nocardioides sp. (strain ATCC BAA-499 / JS614).